The following is a 488-amino-acid chain: ATP synthase subunit beta (488 aa).

164 to 171 contributes to the ATP binding site; that stretch reads GGAGVGKT.

Belongs to the ATPase alpha/beta chains family. In terms of assembly, F-type ATPases have 2 components, CF(1) - the catalytic core - and CF(0) - the membrane proton channel. CF(1) has five subunits: alpha(3), beta(3), gamma(1), delta(1), epsilon(1). CF(0) has four main subunits: a(1), b(1), b'(1) and c(9-12).

The protein localises to the cellular thylakoid membrane. It carries out the reaction ATP + H2O + 4 H(+)(in) = ADP + phosphate + 5 H(+)(out). Produces ATP from ADP in the presence of a proton gradient across the membrane. The catalytic sites are hosted primarily by the beta subunits. The polypeptide is ATP synthase subunit beta (Prochlorococcus marinus (strain NATL2A)).